We begin with the raw amino-acid sequence, 86 residues long: Sec-independent protein translocase protein TatA (86 aa).

Residues I3 to G23 form a helical membrane-spanning segment. The tract at residues M56–K86 is disordered. Polar residues predominate over residues S65 to I74. A compositionally biased stretch (basic and acidic residues) spans N75–K86.

The protein belongs to the TatA/E family. In terms of assembly, forms a complex with TatC.

The protein localises to the cell inner membrane. Its function is as follows. Part of the twin-arginine translocation (Tat) system that transports large folded proteins containing a characteristic twin-arginine motif in their signal peptide across membranes. TatA could form the protein-conducting channel of the Tat system. The sequence is that of Sec-independent protein translocase protein TatA from Prochlorococcus marinus (strain MIT 9215).